A 122-amino-acid polypeptide reads, in one-letter code: MKVFIILGALNAMMAVGTGAFGAHGLEDKLSDKYMSIWEKATTYQMYHGLGLLVIGLISGTTSINVNWAGWLLFFGIVFFSGSLYFLALTQVRILGAITPIGGVLFIIGWLVLVIATLKFAG.

The next 4 membrane-spanning stretches (helical) occupy residues 3–23 (VFII…AFGA), 46–66 (MYHG…SINV), 69–89 (AGWL…FLAL), and 98–118 (ITPI…IATL).

This sequence belongs to the UPF0382 family.

It localises to the cell membrane. This chain is UPF0382 membrane protein SE_0353, found in Staphylococcus epidermidis (strain ATCC 12228 / FDA PCI 1200).